A 284-amino-acid polypeptide reads, in one-letter code: MTAKLIDGKAIAASLRQQIAKRVAERSQQGLRTPGLAVILVGSDPASQVYVSHKRKDCEEVGFISQAYDLPADTTQAALTDLIDRLNEDAAVDGVLLQLPLPAHLDASLLLERIRPDKDVDGFHPYNVGRLAQRIPLLRPCTPKGIMTLLESTGVDLYGLDAVVVGASNIVGRPMAMELLLAGCTVTVTHRFTRDLAGHVGRADLVVVAAGKPGLVKGEWIKPGAIVIDVGINRQEDGKLVGDVVYETALPRAGWITPVPGGVGPMTRACLLENTLYAAETLHD.

NADP(+) is bound by residues 166-168 (GAS) and Ile232.

Belongs to the tetrahydrofolate dehydrogenase/cyclohydrolase family. Homodimer.

The catalysed reaction is (6R)-5,10-methylene-5,6,7,8-tetrahydrofolate + NADP(+) = (6R)-5,10-methenyltetrahydrofolate + NADPH. It carries out the reaction (6R)-5,10-methenyltetrahydrofolate + H2O = (6R)-10-formyltetrahydrofolate + H(+). The protein operates within one-carbon metabolism; tetrahydrofolate interconversion. Catalyzes the oxidation of 5,10-methylenetetrahydrofolate to 5,10-methenyltetrahydrofolate and then the hydrolysis of 5,10-methenyltetrahydrofolate to 10-formyltetrahydrofolate. This is Bifunctional protein FolD 1 from Pseudomonas syringae pv. syringae (strain B728a).